The sequence spans 371 residues: Chaperone protein DnaJ (371 aa).

The region spanning 5–69 is the J domain; that stretch reads DYYEVLGLSK…QKRAQYDQFG (65 aa). The CR-type zinc-finger motif lies at 133-215; sequence GKELNVEIPV…CHGSGKVRKR (83 aa). Positions 146, 149, 163, 166, 189, 192, 203, and 206 each coordinate Zn(2+). CXXCXGXG motif repeat units follow at residues 146 to 153, 163 to 170, 189 to 196, and 203 to 210; these read CDTCKGSG, CKHCSGSG, CSHCSGTG, and CTTCHGSG.

Belongs to the DnaJ family. In terms of assembly, homodimer. It depends on Zn(2+) as a cofactor.

It is found in the cytoplasm. Its function is as follows. Participates actively in the response to hyperosmotic and heat shock by preventing the aggregation of stress-denatured proteins and by disaggregating proteins, also in an autonomous, DnaK-independent fashion. Unfolded proteins bind initially to DnaJ; upon interaction with the DnaJ-bound protein, DnaK hydrolyzes its bound ATP, resulting in the formation of a stable complex. GrpE releases ADP from DnaK; ATP binding to DnaK triggers the release of the substrate protein, thus completing the reaction cycle. Several rounds of ATP-dependent interactions between DnaJ, DnaK and GrpE are required for fully efficient folding. Also involved, together with DnaK and GrpE, in the DNA replication of plasmids through activation of initiation proteins. This is Chaperone protein DnaJ from Bacillus anthracis (strain A0248).